Reading from the N-terminus, the 247-residue chain is Chaperone protein NfaE (247 aa).

The N-terminal stretch at 1–29 is a signal peptide; that stretch reads MKMRAVAVFTGMLTGVLSVTGLLSAGAYA. Positions 106–125 are disordered; it reads GQQSSRRRSVSTGGEFPSDR.

The protein belongs to the periplasmic pilus chaperone family.

It localises to the periplasm. Functionally, involved in the biogenesis of the NFA-I adhesin. The sequence is that of Chaperone protein NfaE (nfaE) from Escherichia coli.